Here is a 93-residue protein sequence, read N- to C-terminus: UPF0213 protein CPE1444 (93 aa).

Residues 1–75 (MNYVYILKCK…KKLTRNQKLQ (75 aa)) form the GIY-YIG domain.

The protein belongs to the UPF0213 family.

In Clostridium perfringens (strain 13 / Type A), this protein is UPF0213 protein CPE1444.